We begin with the raw amino-acid sequence, 454 residues long: Bifunctional protein GlmU (454 aa).

The tract at residues 1-233 is pyrophosphorylase; that stretch reads MQATPRPLAL…EAETIGINSR (233 aa). Residues 13 to 16, lysine 27, glutamine 80, 85 to 86, 108 to 110, glycine 145, glutamate 159, asparagine 174, and asparagine 231 each bind UDP-N-acetyl-alpha-D-glucosamine; these read LAAG, GT, and YGD. Aspartate 110 provides a ligand contact to Mg(2+). Residue asparagine 231 coordinates Mg(2+). The segment at 234–254 is linker; it reads AELVRAEAQFQSQRRAALIEA. The interval 255 to 454 is N-acetyltransferase; it reads GVTMQAPDSV…KAIKDAKSKD (200 aa). Residues arginine 320 and lysine 338 each contribute to the UDP-N-acetyl-alpha-D-glucosamine site. Histidine 350 serves as the catalytic Proton acceptor. Positions 353 and 364 each coordinate UDP-N-acetyl-alpha-D-glucosamine. Residues alanine 367, 373-374, serine 392, serine 410, and arginine 427 contribute to the acetyl-CoA site; that span reads NY.

In the N-terminal section; belongs to the N-acetylglucosamine-1-phosphate uridyltransferase family. This sequence in the C-terminal section; belongs to the transferase hexapeptide repeat family. As to quaternary structure, homotrimer. Requires Mg(2+) as cofactor.

The protein resides in the cytoplasm. It catalyses the reaction alpha-D-glucosamine 1-phosphate + acetyl-CoA = N-acetyl-alpha-D-glucosamine 1-phosphate + CoA + H(+). The enzyme catalyses N-acetyl-alpha-D-glucosamine 1-phosphate + UTP + H(+) = UDP-N-acetyl-alpha-D-glucosamine + diphosphate. The protein operates within nucleotide-sugar biosynthesis; UDP-N-acetyl-alpha-D-glucosamine biosynthesis; N-acetyl-alpha-D-glucosamine 1-phosphate from alpha-D-glucosamine 6-phosphate (route II): step 2/2. It participates in nucleotide-sugar biosynthesis; UDP-N-acetyl-alpha-D-glucosamine biosynthesis; UDP-N-acetyl-alpha-D-glucosamine from N-acetyl-alpha-D-glucosamine 1-phosphate: step 1/1. It functions in the pathway bacterial outer membrane biogenesis; LPS lipid A biosynthesis. In terms of biological role, catalyzes the last two sequential reactions in the de novo biosynthetic pathway for UDP-N-acetylglucosamine (UDP-GlcNAc). The C-terminal domain catalyzes the transfer of acetyl group from acetyl coenzyme A to glucosamine-1-phosphate (GlcN-1-P) to produce N-acetylglucosamine-1-phosphate (GlcNAc-1-P), which is converted into UDP-GlcNAc by the transfer of uridine 5-monophosphate (from uridine 5-triphosphate), a reaction catalyzed by the N-terminal domain. In Jannaschia sp. (strain CCS1), this protein is Bifunctional protein GlmU.